We begin with the raw amino-acid sequence, 72 residues long: Alpha-elapitoxin-Dpp2d (72 aa).

5 disulfide bridges follow: cysteine 3–cysteine 21, cysteine 14–cysteine 42, cysteine 27–cysteine 31, cysteine 46–cysteine 57, and cysteine 58–cysteine 63. Arginine 72 carries the post-translational modification Arginine amide.

Belongs to the three-finger toxin family. Long-chain subfamily. Type II alpha-neurotoxin sub-subfamily. As to quaternary structure, monomer (predominant). Post-translationally, amidation does not significantly affect toxin selectivity, since the activity profile and binding data are reminiscent of classical long-chain 3-finger toxins with a free carboxyl termini. Expressed by the venom gland.

The protein resides in the secreted. Binds with high affinity to muscular (IC(50)=114 nM) and neuronal (alpha-7/CHRNA7) (IC(50)=58 nM) nicotinic acetylcholine receptor (nAChR) and inhibits acetylcholine from binding to the receptor, thereby impairing neuromuscular and neuronal transmission. Competitive radioligand binding assays also demonstrate that this toxin competes with epibatidine binding to the Lymnaea stagnalis acetylcholine-binding protein (Ls-AChBP) (IC(50)=4.9 nM). This is Alpha-elapitoxin-Dpp2d from Dendroaspis polylepis polylepis (Black mamba).